The sequence spans 73 residues: Structural DNA-binding protein p10 (73 aa).

The segment at 1-35 (MPTKAGTKSTAHKKTTTKGPSKSPKGKTHATALHQ) is disordered.

It belongs to the asfivirus P10 family.

The protein localises to the virion. Its function is as follows. May play a role in genome packaging through direct interaction with viral DNA. Binds to ssDNA and dsDNA with the same apparent affinity in vitro. This is Structural DNA-binding protein p10 from African swine fever virus (isolate Tick/Malawi/Lil 20-1/1983) (ASFV).